A 76-amino-acid chain; its full sequence is Probable insulin-like peptide alpha-type 1 (76 aa).

The signal sequence occupies residues 1–24; it reads MKTYSFFVLFIVFIFFISSSKSHS. Disulfide bonds link Cys32-Cys60, Cys44-Cys73, and Cys48-Cys74.

It belongs to the insulin family.

The protein localises to the secreted. The protein is Probable insulin-like peptide alpha-type 1 (ins-21) of Caenorhabditis elegans.